Consider the following 362-residue polypeptide: tRNA-specific 2-thiouridylase MnmA (362 aa).

ATP is bound by residues Ala-6 to Ser-13 and Leu-32. Cys-101 functions as the Nucleophile in the catalytic mechanism. Cys-101 and Cys-197 are oxidised to a cystine. Gly-125 contacts ATP. Residues Lys-147–Gln-149 are interaction with tRNA. Cys-197 serves as the catalytic Cysteine persulfide intermediate.

The protein belongs to the MnmA/TRMU family.

It is found in the cytoplasm. The enzyme catalyses S-sulfanyl-L-cysteinyl-[protein] + uridine(34) in tRNA + AH2 + ATP = 2-thiouridine(34) in tRNA + L-cysteinyl-[protein] + A + AMP + diphosphate + H(+). Its function is as follows. Catalyzes the 2-thiolation of uridine at the wobble position (U34) of tRNA, leading to the formation of s(2)U34. The sequence is that of tRNA-specific 2-thiouridylase MnmA from Acidothermus cellulolyticus (strain ATCC 43068 / DSM 8971 / 11B).